Reading from the N-terminus, the 437-residue chain is Probable indole-3-pyruvate monooxygenase YUCCA3 (437 aa).

FAD is bound at residue 41 to 46 (GAGPSG). NADP(+) is bound at residue 212-217 (GCGNSG).

The protein belongs to the FMO family. Requires FAD as cofactor.

The enzyme catalyses indole-3-pyruvate + NADPH + O2 + H(+) = (indol-3-yl)acetate + CO2 + NADP(+) + H2O. Its pathway is plant hormone metabolism; auxin biosynthesis. Functionally, involved in auxin biosynthesis. Belongs to the set of redundant YUCCA genes probably responsible for auxin biosynthesis in roots. In Arabidopsis thaliana (Mouse-ear cress), this protein is Probable indole-3-pyruvate monooxygenase YUCCA3 (YUC3).